The primary structure comprises 699 residues: D-(-)-3-hydroxybutyrate oligomer hydrolase (699 aa).

An N-terminal signal peptide occupies residues 1–19 (MNPSLCIAVAFACPLSALA). The Charge relay system role is filled by serine 303.

Belongs to the D-(-)-3-hydroxybutyrate oligomer hydrolase family.

It localises to the secreted. It carries out the reaction (3R)-hydroxybutanoate dimer + H2O = 2 (R)-3-hydroxybutanoate + H(+). It functions in the pathway lipid metabolism; butanoate metabolism. In terms of biological role, participates in the degradation of poly-3-hydroxybutyrate (PHB). It works downstream of poly(3-hydroxybutyrate) depolymerase, hydrolyzing D(-)-3-hydroxybutyrate oligomers of various length (3HB-oligomers) into 3HB-monomers. The sequence is that of D-(-)-3-hydroxybutyrate oligomer hydrolase from Azoarcus sp. (strain BH72).